The primary structure comprises 91 residues: Putative regulatory protein Cphy_2880 (91 aa).

It belongs to the RemA family.

The chain is Putative regulatory protein Cphy_2880 from Lachnoclostridium phytofermentans (strain ATCC 700394 / DSM 18823 / ISDg) (Clostridium phytofermentans).